The chain runs to 670 residues: NAD-dependent histone deacetylase SIR2 (670 aa).

Disordered regions lie at residues 1-157 (MTEY…EHPI) and 235-263 (DNDD…PSPS). Acidic residues predominate over residues 45–68 (NEDVDVDADADVDADADADADAEE). Over residues 69–81 (DAQKDILEETKAD) the composition is skewed to basic and acidic residues. The span at 82 to 92 (ELDEVVDEYEE) shows a compositional bias: acidic residues. The segment covering 96-119 (SSNFNGTASDHVGITSSNTGSTAL) has biased composition (polar residues). Positions 120-142 (AASSADTNSGSGNGTGTMATNGT) are enriched in low complexity. Polar residues predominate over residues 239–261 (SLPQKNSSETKNVSDTYTATYPS). Residues 293 to 583 (RLTNFHTIDD…ALVAQKCGWD (291 aa)) enclose the Deacetylase sirtuin-type domain. Residues 318–337 (GAGI…EGFY) and 400–403 (QNID) each bind NAD(+). The active-site Proton acceptor is His420. 4 residues coordinate Zn(2+): Cys428, Cys431, Cys452, and Cys455. NAD(+) contacts are provided by residues 527–529 (GTS), 552–554 (NKD), and Cys569. The interval 617-670 (AELEAEEEKHLPLQQSTAALTPPVSLSADSPGRSSSSSPQPPTQTDIANNQTST) is disordered. Low complexity predominate over residues 641-654 (SLSADSPGRSSSSS). The span at 659 to 670 (TQTDIANNQTST) shows a compositional bias: polar residues.

It belongs to the sirtuin family. Class I subfamily. Zn(2+) serves as cofactor.

It localises to the nucleus. The enzyme catalyses N(6)-acetyl-L-lysyl-[protein] + NAD(+) + H2O = 2''-O-acetyl-ADP-D-ribose + nicotinamide + L-lysyl-[protein]. Its function is as follows. NAD-dependent deacetylase, which asts as a key regulator of gene expression believed to help form modified chromatin structures on the genes it regulates. It is involved in telomeric silencing and in hm mating type loci silencing. The polypeptide is NAD-dependent histone deacetylase SIR2 (SIR2) (Kluyveromyces lactis (strain ATCC 8585 / CBS 2359 / DSM 70799 / NBRC 1267 / NRRL Y-1140 / WM37) (Yeast)).